The sequence spans 455 residues: Zinc finger protein ZPR1 homolog (455 aa).

2 C4-type zinc fingers span residues 28–60 (CPVC…CPHC) and 247–279 (CPNC…CDRC).

Belongs to the ZPR1 family.

It is found in the nucleus. This chain is Zinc finger protein ZPR1 homolog, found in Caenorhabditis elegans.